We begin with the raw amino-acid sequence, 95 residues long: Enhancer of yellow 2b transcription factor (95 aa).

It belongs to the ENY2 family. As to expression, expressed specifically in testis.

Functionally, testis-specific paralog of the ubiquitously expressed transcription and mRNA export factor e(y)2. Cannot functionally replace e(y)2. The polypeptide is Enhancer of yellow 2b transcription factor (e(y)2b) (Drosophila melanogaster (Fruit fly)).